The primary structure comprises 136 residues: Large ribosomal subunit protein uL16 (136 aa).

It belongs to the universal ribosomal protein uL16 family. In terms of assembly, part of the 50S ribosomal subunit.

Binds 23S rRNA and is also seen to make contacts with the A and possibly P site tRNAs. This Hamiltonella defensa subsp. Acyrthosiphon pisum (strain 5AT) protein is Large ribosomal subunit protein uL16.